The sequence spans 560 residues: Nucleoprotein (560 aa).

Positions 53–236 are binding site for the cap structure m7GTP; it reads MRKDKRTDTD…ITQEQSQINV (184 aa). Residues 333–353 are disordered; sequence LTDTGSPNHPPVRNGGSPRLS. Residues aspartate 379 and glutamate 381 each contribute to the Mn(2+) site. Positions 389, 496, 499, and 520 each coordinate Zn(2+). Aspartate 524 contributes to the Mn(2+) binding site.

This sequence belongs to the arenaviridae nucleocapsid protein family. Homomultimerizes to form the nucleocapsid. Binds to viral genomic RNA. Interacts with glycoprotein G2. Interacts with protein Z; this interaction probably directs the encapsidated genome to budding sites. Interacts with protein L; this interaction does not interfere with Z-L interaction. Interacts with host IKBKE (via Protein kinase domain); the interaction inhibits IKBKE kinase activity.

Its subcellular location is the virion. The protein resides in the host cytoplasm. In terms of biological role, encapsidates the genome, protecting it from nucleases. The encapsidated genomic RNA is termed the nucleocapsid (NC). Serves as template for viral transcription and replication. The increased presence of protein N in host cell does not seem to trigger the switch from transcription to replication as observed in other negative strain RNA viruses. Through the interaction with host IKBKE, strongly inhibits the phosphorylation and nuclear translocation of host IRF3, a protein involved in interferon activation pathway, leading to the inhibition of interferon-beta and IRF3-dependent promoters activation. Also encodes a functional 3'-5' exoribonuclease that degrades preferentially dsRNA substrates and thereby participates in the suppression of interferon induction. The polypeptide is Nucleoprotein (Pirital mammarenavirus (isolate Rat/Venezuela/VAV-488/1995) (PIRV)).